The following is a 337-amino-acid chain: Ribosomal RNA small subunit methyltransferase H (337 aa).

S-adenosyl-L-methionine-binding positions include 36-38 (GGH), Asp-56, Phe-82, Asp-100, and Gln-107. The disordered stretch occupies residues 314–337 (GLERRSGRIPNPRSPIPASQGDAR).

It belongs to the methyltransferase superfamily. RsmH family.

The protein localises to the cytoplasm. The enzyme catalyses cytidine(1402) in 16S rRNA + S-adenosyl-L-methionine = N(4)-methylcytidine(1402) in 16S rRNA + S-adenosyl-L-homocysteine + H(+). In terms of biological role, specifically methylates the N4 position of cytidine in position 1402 (C1402) of 16S rRNA. The chain is Ribosomal RNA small subunit methyltransferase H from Xanthomonas oryzae pv. oryzae (strain PXO99A).